Reading from the N-terminus, the 177-residue chain is Large ribosomal subunit protein uL6 (177 aa).

The span at 152–171 (RPPEPYKGKGVRYDDEEVRR) shows a compositional bias: basic and acidic residues. A disordered region spans residues 152–177 (RPPEPYKGKGVRYDDEEVRRKEAKKK).

It belongs to the universal ribosomal protein uL6 family. As to quaternary structure, part of the 50S ribosomal subunit.

Functionally, this protein binds to the 23S rRNA, and is important in its secondary structure. It is located near the subunit interface in the base of the L7/L12 stalk, and near the tRNA binding site of the peptidyltransferase center. The chain is Large ribosomal subunit protein uL6 from Shewanella sp. (strain MR-4).